Consider the following 874-residue polypeptide: Cyanophycin synthetase (874 aa).

Positions 224–480 (KTTLAEAGIP…VAAPVIDMLF (257 aa)) constitute an ATP-grasp domain. ATP is bound at residue 495–501 (GTNGKTT).

This sequence in the C-terminal section; belongs to the MurCDEF family. Homodimer.

The enzyme catalyses [L-4-(L-arginin-2-N-yl)aspartate](n) + L-aspartate + ATP = [L-4-(L-arginin-2-N-yl)aspartate](n)-L-aspartate + ADP + phosphate + H(+). It catalyses the reaction [L-4-(L-arginin-2-N-yl)aspartate](n)-L-aspartate + L-arginine + ATP = [L-4-(L-arginin-2-N-yl)aspartate](n+1) + ADP + phosphate + H(+). Functionally, catalyzes the ATP-dependent polymerization of arginine and aspartate to multi-L-arginyl-poly-L-aspartic acid (cyanophycin; a water-insoluble reserve polymer). In Geminocystis herdmanii (strain PCC 6308) (Synechocystis sp. (strain PCC 6308)), this protein is Cyanophycin synthetase (cphA).